Reading from the N-terminus, the 230-residue chain is Triggering receptor expressed on myeloid cells 1 (230 aa).

The first 20 residues, 1-20 (MRKAGLWGLLCVFFVSEVKA), serve as a signal peptide directing secretion. The 104-residue stretch at 21–124 (AIVLEEERYD…IYHPPNDPVV (104 aa)) folds into the Ig-like V-type domain. Over 21 to 202 (AIVLEEERYD…TDADSVSTSS (182 aa)) the chain is Extracellular. C41 and C113 are joined by a disulfide. The N-linked (GlcNAc...) asparagine glycan is linked to N191. Residues 203-223 (VTISVICGLLSKSLVFIILFI) form a helical membrane-spanning segment. Residues 224-230 (VTKRTFG) lie on the Cytoplasmic side of the membrane.

In terms of assembly, monomer. Homomultimer; when activated. Interacts with TYROBP/DAP12. Interacts with TLR4.

It is found in the cell membrane. In terms of biological role, cell surface receptor that plays important roles in innate and adaptive immunity by amplifying inflammatory responses. Upon activation by various ligands such as PGLYRP1, HMGB1 or HSP70, multimerizes and forms a complex with transmembrane adapter TYROBP/DAP12. In turn, initiates a SYK-mediated cascade of tyrosine phosphorylation, activating multiple downstream mediators such as BTK, MAPK1, MAPK3 or phospholipase C-gamma. This cascade promotes the neutrophil- and macrophage-mediated release of pro-inflammatory cytokines and/or chemokines, as well as their migration and thereby amplifies inflammatory responses that are triggered by bacterial and fungal infections. By also promoting the amplification of inflammatory signals that are initially triggered by Toll-like receptor (TLR) and NOD-like receptor engagement, plays a major role in the pathophysiology of acute and chronic inflammatory diseases of different etiologies including septic shock and atherosclerosis. This chain is Triggering receptor expressed on myeloid cells 1 (Trem1), found in Mus musculus (Mouse).